We begin with the raw amino-acid sequence, 460 residues long: DL-alanine permease SerP2 (460 aa).

Helical transmembrane passes span 26 to 46, 47 to 67, 98 to 118, 124 to 144, 160 to 180, 209 to 229, 246 to 266, 278 to 298, 344 to 364, 368 to 388, 410 to 430, and 433 to 453; these read LIAI…KSIH, LTGP…YILL, FIQW…LIAI, FWLP…LLTL, FGMI…ILIF, FFES…IGMT, QIPI…MSIY, FVTI…NFVV, ALLF…IPAI, FVFI…MTLI, HIFI…LFCF, and TIIP…FTFF.

It belongs to the amino acid-polyamine-organocation (APC) superfamily. Amino acid transporter (AAT) (TC 2.A.3.1) family.

It localises to the cell membrane. Its function is as follows. Transports DL-alanine, DL-serine and glycine. The preferred substrate is DL-alanine. L-serine is a low-affinity substrate. The protein is DL-alanine permease SerP2 of Lactococcus lactis subsp. cremoris (strain MG1363).